The following is a 345-amino-acid chain: 3'-5' exoribonuclease 1 (345 aa).

Composition is skewed to basic and acidic residues over residues 1 to 11 (MEDERGRERGG) and 19 to 46 (PRPE…ETDG). The interval 1-50 (MEDERGRERGGDAAQQKTPRPECEESRPLSVEKKQRCRLDGKETDGSKFI) is disordered. 2 positions are modified to phosphoserine: S55 and S58. Residues 72-106 (INRMSKEELRAKLSEFKLETRGVKDVLKKRLKNYY) form the SAP domain. In terms of domain architecture, Exonuclease spans 126–302 (ICIIDFEATC…DDSKNIARIA (177 aa)). Residues D130 and E132 each coordinate Mg(2+). The active-site Proton acceptor is the E132. Residues E132 and A133 each coordinate AMP. D230 is a binding site for Mg(2+). Catalysis depends on H289, which acts as the Proton acceptor. Residue H289 coordinates AMP. D294 serves as a coordination point for Mg(2+).

In terms of assembly, identified in a histone pre-mRNA complex, at least composed of ERI1, LSM11, SLBP, SNRPB, SYNCRIP and YBX1. Binds to 40S and 60S ribosomal subunits and to 80S assembled ribosomes. Interacts in a cooperative manner with SLBP to the mature 3'-end of histone mRNAs. Found in a ternary complex with SLBP and the stem-loop structure of the 3'-end of histone mRNAs. Mg(2+) serves as cofactor. As to expression, widely expressed with high levels in spleen, thymus and testis (at protein level).

The protein resides in the cytoplasm. It localises to the nucleus. Its subcellular location is the nucleolus. The enzyme catalyses Exonucleolytic cleavage in the 3'- to 5'-direction to yield nucleoside 5'-phosphates.. With respect to regulation, although it can bind simultaneously with SLBP to the 3'-end of histone mRNA, the presence of SLBP prevents the exonuclease activity. Its function is as follows. RNA exonuclease that binds to the 3'-end of histone mRNAs and degrades them, suggesting that it plays an essential role in histone mRNA decay after replication. A 2' and 3'-hydroxyl groups at the last nucleotide of the histone 3'-end is required for efficient 3'-end histone mRNA exonuclease activity and degradation of RNA substrates. Also able to degrade the 3'-overhangs of short interfering RNAs (siRNAs) in vitro, suggesting a possible role as regulator of RNA interference (RNAi). Required for binding the 5'-ACCCA-3' sequence present in stem-loop structure. Able to bind other mRNAs. Required for 5.8S rRNA 3'-end processing. Also binds to 5.8s ribosomal RNA. Binds with high affinity to the stem-loop structure of replication-dependent histone pre-mRNAs. In vitro, does not have sequence specificity. In vitro, has weak DNA exonuclease activity. In vitro, shows biphasic kinetics such that there is rapid hydrolysis of the last three unpaired RNA nucleotides in the 39 flanking sequence followed by a much slower cleavage through the stem that occurs over a longer incubation period in the order of hours. ERI1-mediated RNA metabolism plays a key role in chondrogenesis. The protein is 3'-5' exoribonuclease 1 (Eri1) of Mus musculus (Mouse).